Here is a 315-residue protein sequence, read N- to C-terminus: 4-diphosphocytidyl-2-C-methyl-D-erythritol kinase (315 aa).

Residue lysine 10 is part of the active site. Proline 107–alanine 117 contributes to the ATP binding site. Residue aspartate 148 is part of the active site. Positions histidine 292–glutamate 315 are disordered.

The protein belongs to the GHMP kinase family. IspE subfamily.

The enzyme catalyses 4-CDP-2-C-methyl-D-erythritol + ATP = 4-CDP-2-C-methyl-D-erythritol 2-phosphate + ADP + H(+). It functions in the pathway isoprenoid biosynthesis; isopentenyl diphosphate biosynthesis via DXP pathway; isopentenyl diphosphate from 1-deoxy-D-xylulose 5-phosphate: step 3/6. Functionally, catalyzes the phosphorylation of the position 2 hydroxy group of 4-diphosphocytidyl-2C-methyl-D-erythritol. The sequence is that of 4-diphosphocytidyl-2-C-methyl-D-erythritol kinase from Corynebacterium efficiens (strain DSM 44549 / YS-314 / AJ 12310 / JCM 11189 / NBRC 100395).